We begin with the raw amino-acid sequence, 211 residues long: Claudin-1 (211 aa).

At 1–7 the chain is on the cytoplasmic side; the sequence is MANAGLQ. A helical membrane pass occupies residues 8 to 28; sequence LLGFILASLGWIGSIVSTALP. Over 29–81 the chain is Extracellular; sequence QWKIYSYAGDNIVTAQAIYEGLWMSCVSQSTGQIQCKVFDSLLNLNSTLQATR. C54 and C64 are joined by a disulfide. A helical transmembrane segment spans residues 82 to 102; sequence ALMVIGILLGLIAIFVSTIGM. The Cytoplasmic portion of the chain corresponds to 103-115; the sequence is KCMRCLEDDEVQK. A helical membrane pass occupies residues 116–136; that stretch reads MWMAVIGGIIFVISGLATLVA. Over 137-163 the chain is Extracellular; that stretch reads TAWYGNRIVQEFYDPMTPVNARYEFGQ. A helical membrane pass occupies residues 164–184; the sequence is ALFTGWAAASLCLLGGALLSC. Residues 185-211 are Cytoplasmic-facing; that stretch reads SCPRKTTSYPTPRPYPKPTPSSGKDYV. The disordered stretch occupies residues 190–211; it reads TTSYPTPRPYPKPTPSSGKDYV. Residues 210–211 are interactions with TJP1, TJP2, TJP3 and PATJ; that stretch reads YV.

Belongs to the claudin family. Can form homo- and heteropolymers with other CLDN. Homopolymers interact with CLDN3, but not CLDN2, homopolymers. Directly interacts with TJP1/ZO-1, TJP2/ZO-2 and TJP3/ZO-3. Interacts with MPDZ and PATJ. Interacts with OCLN, CD81, CLDN4, CLDN6 and CLDN9. Detected in epididymis (at protein level). Detected in testis and epididymis.

The protein localises to the cell junction. It is found in the tight junction. Its subcellular location is the cell membrane. It localises to the basolateral cell membrane. Functionally, claudins function as major constituents of the tight junction complexes that regulate the permeability of epithelia. While some claudin family members play essential roles in the formation of impermeable barriers, others mediate the permeability to ions and small molecules. Often, several claudin family members are coexpressed and interact with each other, and this determines the overall permeability. CLDN1 is required to prevent the paracellular diffusion of small molecules through tight junctions in the epidermis and is required for the normal barrier function of the skin. Required for normal water homeostasis and to prevent excessive water loss through the skin, probably via an indirect effect on the expression levels of other proteins, since CLDN1 itself seems to be dispensable for water barrier formation in keratinocyte tight junctions. In Rattus norvegicus (Rat), this protein is Claudin-1 (Cldn1).